We begin with the raw amino-acid sequence, 459 residues long: ATP-binding protein Uup-like (459 aa).

Residues 132 to 350 (FEMEDVSYEI…QQANFWASKA (219 aa)) form the ABC transporter domain. 164 to 171 (GPNGCGKT) contacts ATP. Positions 357–375 (AKKSEPLKEESAVKNDRTS) are enriched in basic and acidic residues. A disordered region spans residues 357–381 (AKKSEPLKEESAVKNDRTSKPKSVK).

Belongs to the ABC transporter superfamily. ABCF family. Uup subfamily.

Its subcellular location is the cytoplasm. It catalyses the reaction ATP + H2O = ADP + phosphate + H(+). In terms of biological role, might play a role in ribosome assembly or function; this is missing the first ABC transporter domain compared to paralogs. The chain is ATP-binding protein Uup-like (uup-B) from Haemophilus influenzae (strain ATCC 51907 / DSM 11121 / KW20 / Rd).